The primary structure comprises 317 residues: Taste receptor type 2 member 14 (317 aa).

Over 1-7 (MGGVIKS) the chain is Extracellular. Residues 8–28 (IFTFVLIVEFIIGNLGNSFIA) form a helical membrane-spanning segment. Residues 29-55 (LVNCIDWVKGRKISSVDRILTALAISK) lie on the Cytoplasmic side of the membrane. The chain crosses the membrane as a helical span at residues 56 to 76 (ISLVWLIFGSWCVSVFFPALF). Over 77-87 (ATEKMFRMLTN) the chain is Extracellular. Positions 86 and 89 each coordinate cholesterol. Residues 88–108 (IWTVINHFSVWLATGLGTFYF) form a helical membrane-spanning segment. The Cytoplasmic portion of the chain corresponds to 109 to 129 (LKIANFSNSIFLYLKWRVKKV). The chain crosses the membrane as a helical span at residues 130 to 150 (VLVLLLVTSVFLFLNIALINI). Residues 151–184 (HINASINGYRRNKTCSSDSSNFTRFSSLIVLTST) are Extracellular-facing. 3 N-linked (GlcNAc...) asparagine glycosylation sites follow: asparagine 153, asparagine 162, and asparagine 171. Valine 180 serves as a coordination point for cholesterol. Residues 185 to 205 (VFIFIPFTLSLAMFLLLIFSM) form a helical membrane-spanning segment. The Cytoplasmic segment spans residues 206–232 (WKHRKKMQHTVKRSGDASTKAHRGVKS). Residues 233–253 (MMTFFLLYAIFSLSFFISVWT) form a helical membrane-spanning segment. The Extracellular portion of the chain corresponds to 254-261 (SERLEENL). Residues 262 to 282 (IILSQVMGMAYPSCHSCVLIL) form a helical membrane-spanning segment. Residues serine 265 and methionine 268 each contribute to the cholesterol site. Over 283 to 317 (GNKKLRQASLSVLLWLRYMFKDGEPSGHKEFRESS) the chain is Cytoplasmic.

The protein belongs to the G-protein coupled receptor T2R family. In terms of assembly, core component of the TAS2R14-GNAI1 complex, consisting of TAS2R14, GNAI1, GNB1 and GNG2; within the complex interacts with GNAI1. Core component of the TAS2R14-GNAT3 complex, consisting of TAS2R14, GNAT3, GNB1 and GNG2; within the complex interacts with GNAT3. Core component of the TAS2R14-GNAS2 complex, consisting of TAS2R14, GNAS2, GNB1 and GNG2; within the complex interacts with GNAS2.

The protein localises to the membrane. The catalysed reaction is Ca(2+)(in) = Ca(2+)(out). The enzyme catalyses 3',5'-cyclic AMP(in) = 3',5'-cyclic AMP(out). Its activity is regulated as follows. Basal activity is enhanced by binding to bitter tastants, such as flufenamic acid and aristolochic acid. Regulated by cholesterol in a concentration-dependent manner. Functionally, gustducin-linked G-protein coupled receptor that plays a role in the perception of bitterness. The activity of this receptor stimulates GNAT3, activating the gustducin G-protein pathway. Likely plays a role in sensing the chemical composition of the gastrointestinal content and other extra-oral tissues via the inhibitory G-protein pathways. The polypeptide is Taste receptor type 2 member 14 (TAS2R14) (Pan paniscus (Pygmy chimpanzee)).